Consider the following 201-residue polypeptide: 3-isopropylmalate dehydratase small subunit (201 aa).

It belongs to the LeuD family. LeuD type 1 subfamily. Heterodimer of LeuC and LeuD.

It catalyses the reaction (2R,3S)-3-isopropylmalate = (2S)-2-isopropylmalate. It functions in the pathway amino-acid biosynthesis; L-leucine biosynthesis; L-leucine from 3-methyl-2-oxobutanoate: step 2/4. Catalyzes the isomerization between 2-isopropylmalate and 3-isopropylmalate, via the formation of 2-isopropylmaleate. The polypeptide is 3-isopropylmalate dehydratase small subunit (Kineococcus radiotolerans (strain ATCC BAA-149 / DSM 14245 / SRS30216)).